Reading from the N-terminus, the 613-residue chain is UvrABC system protein C (613 aa).

Residues 12–89 enclose the GIY-YIG domain; that stretch reads DHPGVYIMHD…IKQHRPRYNV (78 aa). Residues 199–234 form the UVR domain; it reads TALVKELKEQMEAAAARLEFEKAARLRDQLRAVQEV.

This sequence belongs to the UvrC family. In terms of assembly, interacts with UvrB in an incision complex.

It localises to the cytoplasm. Its function is as follows. The UvrABC repair system catalyzes the recognition and processing of DNA lesions. UvrC both incises the 5' and 3' sides of the lesion. The N-terminal half is responsible for the 3' incision and the C-terminal half is responsible for the 5' incision. In Moorella thermoacetica (strain ATCC 39073 / JCM 9320), this protein is UvrABC system protein C.